A 70-amino-acid polypeptide reads, in one-letter code: V-type proton ATPase subunit e1 (70 aa).

A run of 2 helical transmembrane segments spans residues 1-21 (MGFL…SLCV) and 36-56 (LTLV…VYIA).

It belongs to the V-ATPase e1/e2 subunit family. In terms of assembly, V-ATPase is a heteromultimeric enzyme composed of a peripheral catalytic V1 complex (components A to H) attached to an integral membrane V0 proton pore complex (components: a, c, c'', d and e).

Its subcellular location is the golgi apparatus. It localises to the trans-Golgi network membrane. Functionally, subunit of the integral membrane V0 complex of vacuolar ATPase. V-ATPase is responsible for acidifying a variety of intracellular compartments in eukaryotic cells. This is V-type proton ATPase subunit e1 (VHA-e1) from Arabidopsis thaliana (Mouse-ear cress).